A 173-amino-acid polypeptide reads, in one-letter code: Large ribosomal subunit protein bL9 (173 aa).

This sequence belongs to the bacterial ribosomal protein bL9 family.

Functionally, binds to the 23S rRNA. This Chlamydia felis (strain Fe/C-56) (Chlamydophila felis) protein is Large ribosomal subunit protein bL9.